The primary structure comprises 363 residues: Pyrimidine monooxygenase RutA (363 aa).

FMN contacts are provided by residues 49-50, Asn-115, Glu-124, 140-141, and Ser-190; these read IK and RY.

Belongs to the NtaA/SnaA/DszA monooxygenase family. RutA subfamily.

The catalysed reaction is uracil + FMNH2 + NADH + O2 = (Z)-3-ureidoacrylate + FMN + NAD(+) + H2O + H(+). It catalyses the reaction thymine + FMNH2 + NADH + O2 = (Z)-2-methylureidoacrylate + FMN + NAD(+) + H2O + H(+). Functionally, catalyzes the pyrimidine ring opening between N-3 and C-4 by an unusual flavin hydroperoxide-catalyzed mechanism, adding oxygen atoms in the process to yield ureidoacrylate peracid, that immediately reacts with FMN forming ureidoacrylate and FMN-N(5)-oxide. The FMN-N(5)-oxide reacts spontaneously with NADH to produce FMN. Requires the flavin reductase RutF to regenerate FMN in vivo. The chain is Pyrimidine monooxygenase RutA from Klebsiella pneumoniae (strain 342).